Reading from the N-terminus, the 147-residue chain is Acidic phospholipase A2 beta-bungarotoxin A4 chain (147 aa).

A signal peptide spans 1–19; sequence MNPAHLLVLSAVCVSLLGA. Positions 20-27 are excised as a propeptide; sequence ANIPPQHL. Cystine bridges form between C54–C146, C56–C72, C71–C127, C78–C120, C88–C113, and C106–C118. Ca(2+)-binding residues include Y55, G57, and G59. H75 is a catalytic residue. Residue D76 coordinates Ca(2+). The active site involves D121.

It belongs to the phospholipase A2 family. Group I subfamily. D49 sub-subfamily. As to quaternary structure, heterodimer; disulfide-linked. The A chains have phospholipase A2 activity and the B chains show homology with the basic protease inhibitors. Ca(2+) is required as a cofactor. Expressed by the venom gland.

The protein resides in the secreted. The enzyme catalyses a 1,2-diacyl-sn-glycero-3-phosphocholine + H2O = a 1-acyl-sn-glycero-3-phosphocholine + a fatty acid + H(+). In terms of biological role, snake venom phospholipase A2 (PLA2) that inhibits neuromuscular transmission by blocking acetylcholine release from the nerve termini. PLA2 catalyzes the calcium-dependent hydrolysis of the 2-acyl groups in 3-sn-phosphoglycerides. This chain is Acidic phospholipase A2 beta-bungarotoxin A4 chain, found in Bungarus multicinctus (Many-banded krait).